The chain runs to 670 residues: DNA ligase (670 aa).

NAD(+)-binding positions include 34–38, 83–84, and glutamate 117; these read DAEYD and SL. Lysine 119 (N6-AMP-lysine intermediate) is an active-site residue. NAD(+)-binding residues include arginine 140, glutamate 177, lysine 293, and lysine 317. Zn(2+) is bound by residues cysteine 411, cysteine 414, cysteine 429, and cysteine 434. The 80-residue stretch at 591–670 folds into the BRCT domain; it reads KVGGRFTGKT…DEFLAMLEEG (80 aa).

It belongs to the NAD-dependent DNA ligase family. LigA subfamily. It depends on Mg(2+) as a cofactor. The cofactor is Mn(2+).

The catalysed reaction is NAD(+) + (deoxyribonucleotide)n-3'-hydroxyl + 5'-phospho-(deoxyribonucleotide)m = (deoxyribonucleotide)n+m + AMP + beta-nicotinamide D-nucleotide.. Functionally, DNA ligase that catalyzes the formation of phosphodiester linkages between 5'-phosphoryl and 3'-hydroxyl groups in double-stranded DNA using NAD as a coenzyme and as the energy source for the reaction. It is essential for DNA replication and repair of damaged DNA. The chain is DNA ligase from Geobacter sulfurreducens (strain ATCC 51573 / DSM 12127 / PCA).